The sequence spans 442 residues: ATP-dependent protease ATPase subunit HslU (442 aa).

Residues isoleucine 18, 60-65 (GVGKTE), aspartate 255, glutamate 320, and arginine 392 each bind ATP.

The protein belongs to the ClpX chaperone family. HslU subfamily. A double ring-shaped homohexamer of HslV is capped on each side by a ring-shaped HslU homohexamer. The assembly of the HslU/HslV complex is dependent on binding of ATP.

The protein resides in the cytoplasm. Functionally, ATPase subunit of a proteasome-like degradation complex; this subunit has chaperone activity. The binding of ATP and its subsequent hydrolysis by HslU are essential for unfolding of protein substrates subsequently hydrolyzed by HslV. HslU recognizes the N-terminal part of its protein substrates and unfolds these before they are guided to HslV for hydrolysis. The sequence is that of ATP-dependent protease ATPase subunit HslU from Shewanella putrefaciens (strain CN-32 / ATCC BAA-453).